A 72-amino-acid chain; its full sequence is Translation initiation factor IF-1 (72 aa).

The region spanning 1–72 is the S1-like domain; the sequence is MSKEDSIEVT…TKGRITFRHR (72 aa).

The protein belongs to the IF-1 family. In terms of assembly, component of the 30S ribosomal translation pre-initiation complex which assembles on the 30S ribosome in the order IF-2 and IF-3, IF-1 and N-formylmethionyl-tRNA(fMet); mRNA recruitment can occur at any time during PIC assembly.

The protein localises to the cytoplasm. Functionally, one of the essential components for the initiation of protein synthesis. Stabilizes the binding of IF-2 and IF-3 on the 30S subunit to which N-formylmethionyl-tRNA(fMet) subsequently binds. Helps modulate mRNA selection, yielding the 30S pre-initiation complex (PIC). Upon addition of the 50S ribosomal subunit IF-1, IF-2 and IF-3 are released leaving the mature 70S translation initiation complex. The protein is Translation initiation factor IF-1 of Solibacter usitatus (strain Ellin6076).